The chain runs to 278 residues: 2-dehydro-3-deoxyphosphooctonate aldolase (278 aa).

This sequence belongs to the KdsA family.

The protein localises to the cytoplasm. The catalysed reaction is D-arabinose 5-phosphate + phosphoenolpyruvate + H2O = 3-deoxy-alpha-D-manno-2-octulosonate-8-phosphate + phosphate. It functions in the pathway carbohydrate biosynthesis; 3-deoxy-D-manno-octulosonate biosynthesis; 3-deoxy-D-manno-octulosonate from D-ribulose 5-phosphate: step 2/3. It participates in bacterial outer membrane biogenesis; lipopolysaccharide biosynthesis. The sequence is that of 2-dehydro-3-deoxyphosphooctonate aldolase from Bartonella tribocorum (strain CIP 105476 / IBS 506).